A 33-amino-acid polypeptide reads, in one-letter code: Potassium channel toxin alpha-KTx 10.4 (33 aa).

Disulfide bonds link Cys3/Cys22, Cys8/Cys27, and Cys12/Cys29.

This sequence belongs to the short scorpion toxin superfamily. Potassium channel inhibitor family. Alpha-KTx 10 subfamily. In terms of tissue distribution, expressed by the venom gland.

It localises to the secreted. Blocks human voltage-gated potassium channel Kv1.2/KCNA2 (IC(50)=3.6 nM) and Kv1.3/KCNA3 (IC(50)=72 nM). The protein is Potassium channel toxin alpha-KTx 10.4 of Centruroides tecomanus (Scorpion).